The following is a 723-amino-acid chain: Peroxisomal bifunctional enzyme (723 aa).

Positions 1 to 282 are enoyl-CoA hydratase / isomerase; it reads MAEYTRLHNA…LAERKANKWS (282 aa). Lysine 38 bears the N6-succinyllysine mark. Glycine 101 contacts substrate. N6-acetyllysine; alternate is present on lysine 165. At lysine 165 the chain carries N6-succinyllysine; alternate. Lysine 171 bears the N6-acetyllysine mark. Residue lysine 219 is modified to N6-acetyllysine; alternate. The residue at position 219 (lysine 219) is an N6-succinyllysine; alternate. Lysine 250 is modified (N6-acetyllysine). Lysine 280 and lysine 290 each carry N6-succinyllysine. The tract at residues 283–572 is 3-hydroxyacyl-CoA dehydrogenase; sequence TPSGASWKTA…DVLCELGRFG (290 aa). N6-acetyllysine occurs at positions 346, 350, and 464. N6-succinyllysine is present on lysine 532. At threonine 548 the chain carries Phosphothreonine. At lysine 577 the chain carries N6-succinyllysine. Residues lysine 584, lysine 591, and lysine 710 each carry the N6-acetyllysine; alternate modification. 3 positions are modified to N6-succinyllysine; alternate: lysine 584, lysine 591, and lysine 710. A disordered region spans residues 699–723; that stretch reads KKLASQGNPPQKEWQSLAGSPSSKL. Residues 703–723 are compositionally biased toward polar residues; sequence SQGNPPQKEWQSLAGSPSSKL. Serine 718 carries the phosphoserine modification. A Microbody targeting signal motif is present at residues 721–723; sequence SKL. Lysine 722 bears the N6-succinyllysine mark.

It in the N-terminal section; belongs to the enoyl-CoA hydratase/isomerase family. This sequence in the C-terminal section; belongs to the 3-hydroxyacyl-CoA dehydrogenase family. As to quaternary structure, monomer. In terms of processing, acetylated, leading to enhanced enzyme activity. Acetylation is enhanced by up to 80% after treatment either with trichostin A (TSA) or with nicotinamide (NAM) with highest increase on Lys-346. Acetylation and enzyme activity increased by about 1.5% on addition of fatty acids.

The protein localises to the peroxisome. The enzyme catalyses a (3S)-3-hydroxyacyl-CoA = a (2E)-enoyl-CoA + H2O. It catalyses the reaction a 4-saturated-(3S)-3-hydroxyacyl-CoA = a (3E)-enoyl-CoA + H2O. It carries out the reaction a (3Z)-enoyl-CoA = a 4-saturated (2E)-enoyl-CoA. The catalysed reaction is a (3E)-enoyl-CoA = a 4-saturated (2E)-enoyl-CoA. The enzyme catalyses a (3S)-3-hydroxyacyl-CoA + NAD(+) = a 3-oxoacyl-CoA + NADH + H(+). It catalyses the reaction (2S,3S)-3-hydroxy-2-methylbutanoyl-CoA = (2E)-2-methylbut-2-enoyl-CoA + H2O. It carries out the reaction (3S)-hydroxyhexadecanoyl-CoA + NAD(+) = 3-oxohexadecanoyl-CoA + NADH + H(+). The catalysed reaction is (3S)-hydroxyhexadecanoyl-CoA = (2E)-hexadecenoyl-CoA + H2O. The enzyme catalyses (2E)-hexadecenedioyl-CoA + H2O = (3S)-hydroxyhexadecanedioyl-CoA. It catalyses the reaction (3S)-hydroxyhexadecanedioyl-CoA + NAD(+) = 3-oxohexadecanedioyl-CoA + NADH + H(+). It carries out the reaction (3E,5Z)-tetradecadienoyl-CoA = (2E,5Z)-tetradecadienoyl-CoA. The catalysed reaction is (3E,5Z)-octadienoyl-CoA = (2E,5Z)-octadienoyl-CoA. The enzyme catalyses (3S)-hydroxydecanoyl-CoA + NAD(+) = 3-oxodecanoyl-CoA + NADH + H(+). It catalyses the reaction (3E)-decenoyl-CoA = (2E)-decenoyl-CoA. It carries out the reaction (3Z)-hexenoyl-CoA = (2E)-hexenoyl-CoA. The catalysed reaction is (3E)-hexenoyl-CoA = (2E)-hexenoyl-CoA. The enzyme catalyses (3S)-hydroxydecanoyl-CoA = (2E)-decenoyl-CoA + H2O. It catalyses the reaction (3S)-hydroxyhexanoyl-CoA = (2E)-hexenoyl-CoA + H2O. Its pathway is lipid metabolism; fatty acid beta-oxidation. Its activity is regulated as follows. Enzyme activity enhanced by acetylation. Peroxisomal trifunctional enzyme possessing 2-enoyl-CoA hydratase, 3-hydroxyacyl-CoA dehydrogenase, and delta 3, delta 2-enoyl-CoA isomerase activities. Catalyzes two of the four reactions of the long chain fatty acids peroxisomal beta-oxidation pathway. Can also use branched-chain fatty acids such as 2-methyl-2E-butenoyl-CoA as a substrate, which is hydrated into (2S,3S)-3-hydroxy-2-methylbutanoyl-CoA. Optimal isomerase for 2,5 double bonds into 3,5 form isomerization in a range of enoyl-CoA species. Also able to isomerize both 3-cis and 3-trans double bonds into the 2-trans form in a range of enoyl-CoA species. Regulates the amount of medium-chain dicarboxylic fatty acids which are essential regulators of all fatty acid oxidation pathways. Also involved in the degradation of long-chain dicarboxylic acids through peroxisomal beta-oxidation. In Pongo abelii (Sumatran orangutan), this protein is Peroxisomal bifunctional enzyme (EHHADH).